The sequence spans 364 residues: Transcription factor IIIA (364 aa).

9 C2H2-type zinc fingers span residues 38–62 (FICSFPDCSASYNKAWKLDAHLCKH), 68–92 (FVCDYEGCGKAFIRDYHLSRHVLIH), 98–123 (FVCADDGCNQKFNTKSNLKKHIERKH), 130–154 (YVCSYEGCKKAFKKHQQLRTHQCQH), 160–184 (FRCTHEGCGKHFASPSRLKRHGKVH), 187–211 (YLCQKGCSFMGKTWTELLKHMREAH), 215–237 (ITCNVCQRMFKRRDYLKQHMKTH), 244–269 (YRCPRQGCGRTYTTVFNLQSHILSFH), and 275–299 (FVCEHAGCGKTFAMKQSLMRHSVVH). The interval 299 to 364 (HDPDKKRMKL…PPPAALLTVC (66 aa)) is disordered. Over residues 338-352 (SLPNASAESSSSPEA) the composition is skewed to low complexity.

The protein localises to the nucleus. Involved in ribosomal large subunit biogenesis. Binds the approximately 50 base pairs internal control region (ICR) of 5S ribosomal RNA genes. It is required for their RNA polymerase III-dependent transcription and may also maintain the transcription of other genes. Also binds the transcribed 5S RNA's. This is Transcription factor IIIA (Gtf3a) from Mus musculus (Mouse).